The primary structure comprises 227 residues: Cytochrome c oxidase subunit 2 (227 aa).

Residues 1–14 (MAHSFQLGFQDATS) are Mitochondrial intermembrane-facing. A helical membrane pass occupies residues 15–45 (PIMEELLHFHDHTLMIVFLISSLVLYIITLM). The Mitochondrial matrix portion of the chain corresponds to 46-59 (LTTKLTHTSTMDAQ). Residues 60-87 (EVETVWTILPAIILILIALPSLRILYLM) form a helical membrane-spanning segment. The Mitochondrial intermembrane portion of the chain corresponds to 88 to 227 (DEINTPSLTV…HFENWSTSMI (140 aa)). H161, C196, E198, C200, H204, and M207 together coordinate Cu cation. A Mg(2+)-binding site is contributed by E198.

Belongs to the cytochrome c oxidase subunit 2 family. In terms of assembly, component of the cytochrome c oxidase (complex IV, CIV), a multisubunit enzyme composed of 14 subunits. The complex is composed of a catalytic core of 3 subunits MT-CO1, MT-CO2 and MT-CO3, encoded in the mitochondrial DNA, and 11 supernumerary subunits COX4I, COX5A, COX5B, COX6A, COX6B, COX6C, COX7A, COX7B, COX7C, COX8 and NDUFA4, which are encoded in the nuclear genome. The complex exists as a monomer or a dimer and forms supercomplexes (SCs) in the inner mitochondrial membrane with NADH-ubiquinone oxidoreductase (complex I, CI) and ubiquinol-cytochrome c oxidoreductase (cytochrome b-c1 complex, complex III, CIII), resulting in different assemblies (supercomplex SCI(1)III(2)IV(1) and megacomplex MCI(2)III(2)IV(2)). Found in a complex with TMEM177, COA6, COX18, COX20, SCO1 and SCO2. Interacts with TMEM177 in a COX20-dependent manner. Interacts with COX20. Interacts with COX16. Cu cation serves as cofactor.

The protein localises to the mitochondrion inner membrane. It catalyses the reaction 4 Fe(II)-[cytochrome c] + O2 + 8 H(+)(in) = 4 Fe(III)-[cytochrome c] + 2 H2O + 4 H(+)(out). In terms of biological role, component of the cytochrome c oxidase, the last enzyme in the mitochondrial electron transport chain which drives oxidative phosphorylation. The respiratory chain contains 3 multisubunit complexes succinate dehydrogenase (complex II, CII), ubiquinol-cytochrome c oxidoreductase (cytochrome b-c1 complex, complex III, CIII) and cytochrome c oxidase (complex IV, CIV), that cooperate to transfer electrons derived from NADH and succinate to molecular oxygen, creating an electrochemical gradient over the inner membrane that drives transmembrane transport and the ATP synthase. Cytochrome c oxidase is the component of the respiratory chain that catalyzes the reduction of oxygen to water. Electrons originating from reduced cytochrome c in the intermembrane space (IMS) are transferred via the dinuclear copper A center (CU(A)) of subunit 2 and heme A of subunit 1 to the active site in subunit 1, a binuclear center (BNC) formed by heme A3 and copper B (CU(B)). The BNC reduces molecular oxygen to 2 water molecules using 4 electrons from cytochrome c in the IMS and 4 protons from the mitochondrial matrix. The polypeptide is Cytochrome c oxidase subunit 2 (MT-CO2) (Cephalopachus bancanus (Western tarsier)).